Reading from the N-terminus, the 216-residue chain is GTP-binding nuclear protein Ran, testis-specific isoform (216 aa).

Ala-2 bears the N-acetylalanine mark. The Small GTPase Ran-type domain maps to 7 to 171; it reads PQVQFKVVLV…FWLARKLIGD (165 aa). 17 to 24 lines the GTP pocket; the sequence is GDGGTGKT. Thr-24 is subject to Phosphothreonine. The segment at 37-45 is switch-I; the sequence is KEYVATLGV. Position 60 is an N6-acetyllysine (Lys-60). Residue 65–69 participates in GTP binding; it reads DTAGQ. The interval 68–84 is switch-II; it reads GQEKFGGLRDGYYIQAQ. Lys-71 bears the N6-acetyllysine; alternate mark. Lys-71 participates in a covalent cross-link: Glycyl lysine isopeptide (Lys-Gly) (interchain with G-Cter in SUMO2); alternate. Lys-71 is covalently cross-linked (Glycyl lysine isopeptide (Lys-Gly) (interchain with G-Cter in ubiquitin); alternate). Lys-99 carries the post-translational modification N6-acetyllysine. 122-125 is a GTP binding site; that stretch reads NKVD. The residue at position 134 (Lys-134) is an N6-acetyllysine. N6-acetyllysine; alternate is present on Lys-159. Residue Lys-159 is modified to N6-succinyllysine; alternate.

The protein belongs to the small GTPase superfamily. Ran family. In terms of tissue distribution, testis specific.

The protein resides in the nucleus. It catalyses the reaction GTP + H2O = GDP + phosphate + H(+). GTP-binding protein involved in nucleocytoplasmic transport. Required for the import of protein into the nucleus and also for RNA export. Involved in chromatin condensation and control of cell cycle. This Mus musculus (Mouse) protein is GTP-binding nuclear protein Ran, testis-specific isoform (Rasl2-9).